The chain runs to 426 residues: Ammonium transporter Rh type A (426 aa).

At 1–4 (MRFK) the chain is on the cytoplasmic side. A helical transmembrane segment spans residues 5–25 (FPLMAIGLEVVMIVLFALFVQ). At 26–54 (YETSVNTSRNPNETESAAMDVEKTMESYP) the chain is on the extracellular side. N-linked (GlcNAc...) asparagine glycosylation is found at Asn31 and Asn37. A helical transmembrane segment spans residues 55-75 (FFQDVHIMVFAGFGFLMTFLW). The Cytoplasmic portion of the chain corresponds to 76 to 78 (KYG). A helical transmembrane segment spans residues 79–99 (FSGVGINLLIAALGLQWGTII). At 100–124 (QGIFRSHGQKFLIEMKNMIHADFST) the chain is on the extracellular side. 2 helical membrane-spanning segments follow: residues 125–145 (VTVLISFGAVLGKTSPVQMLI) and 146–166 (MTILEITVYAANEYLVFKILW). The Extracellular portion of the chain corresponds to 167-170 (ASDT). The chain crosses the membrane as a helical span at residues 171–191 (GESMTIHAFGAYFGLAVAGIL). Topologically, residues 192–210 (YRSGLKEKHSNEESVYHSD) are cytoplasmic. A helical transmembrane segment spans residues 211 to 231 (LFAMIGSLFLWIFWPSFNSAT). At 232-241 (ADEAKKQYRA) the chain is on the extracellular side. The helical transmembrane segment at 242 to 262 (IVNTYFSLAASVVTAYACSSL) threads the bilayer. At 263–270 (LESRGKLN) the chain is on the cytoplasmic side. Residues 271–288 (MVHIQNATLAGGVAVGTC) traverse the membrane as a helical segment. Over 289–292 (ADME) the chain is Extracellular. Residues 293-313 (IPPYYAMIIGSIAGAVSVFGF) form a helical membrane-spanning segment. The Cytoplasmic portion of the chain corresponds to 314–331 (KFLTPLFTTKLRIHDTCG). The chain crosses the membrane as a helical span at residues 332 to 352 (VHNLHGLPGVIGGLAGIITVA). The Extracellular segment spans residues 353-371 (LEESDSTKTVSQAAALGSS). Residues 372-392 (IATALVGGLITGAILKIPFWA) form a helical membrane-spanning segment. Residues 393-426 (QPPDEDCYDDSVYWEVPERKEYDNHFHELLSTLH) are Cytoplasmic-facing.

It belongs to the ammonium transporter (TC 2.A.49) family. Rh subfamily. As to quaternary structure, homodimer. Heterotrimer; a RHCE monomer interacts with a RHAG homodimer. Component of the ankyrin-1 complex in the erythrocyte, composed of ANK1, RHCE, RHAG, SLC4A1, EPB42, GYPA, GYPB and AQP1. Interacts with GYPB (via the N-terminal); this interaction bridges the (RHAG)2(RHCE) heterotrimer with the SLC4A1 Band 3 I dimer complexed with GYPA. Glycosylated.

Its subcellular location is the membrane. The enzyme catalyses methylamine(out) = methylamine(in). It carries out the reaction NH4(+)(in) = NH4(+)(out). It catalyses the reaction CO2(out) = CO2(in). Component of the ankyrin-1 complex, a multiprotein complex involved in the stability and shape of the erythrocyte membrane. Heterotrimer with RHCE (RHAG)2(RHCE), that transports ammonium and its related derivative methylammonium, in both neutral and ionic forms, across the erythrocyte membrane. The transport of NH4(+) is electrogenic and masks the NH3 transport. Also, may act as a CO2 channel. Moreover in erythrocyte, regulates RHD membrane expression and is associated with rhesus blood group antigen expression. The sequence is that of Ammonium transporter Rh type A from Bos taurus (Bovine).